A 299-amino-acid chain; its full sequence is HTH-type transcriptional regulator ArgP (299 aa).

Positions 4–60 (PDYRTLQALDAVIRERGFERAAQKLCITQSAVSQRIKQLENMFGQPLLVRTVPPRPT) constitute an HTH lysR-type domain. Residues 21–40 (FERAAQKLCITQSAVSQRIK) constitute a DNA-binding region (H-T-H motif).

The protein belongs to the LysR transcriptional regulatory family. In terms of assembly, homodimer.

Controls the transcription of genes involved in arginine and lysine metabolism. The chain is HTH-type transcriptional regulator ArgP from Erwinia tasmaniensis (strain DSM 17950 / CFBP 7177 / CIP 109463 / NCPPB 4357 / Et1/99).